We begin with the raw amino-acid sequence, 328 residues long: Biotin synthase (328 aa).

One can recognise a Radical SAM core domain in the interval 42–267 (YHVQLASLLS…LMPGSRVRLS (226 aa)). Cys57, Cys61, and Cys64 together coordinate [4Fe-4S] cluster. Residues Cys101, Cys133, Cys193, and Arg265 each coordinate [2Fe-2S] cluster.

It belongs to the radical SAM superfamily. Biotin synthase family. As to quaternary structure, homodimer. The cofactor is [4Fe-4S] cluster. [2Fe-2S] cluster serves as cofactor.

It catalyses the reaction (4R,5S)-dethiobiotin + (sulfur carrier)-SH + 2 reduced [2Fe-2S]-[ferredoxin] + 2 S-adenosyl-L-methionine = (sulfur carrier)-H + biotin + 2 5'-deoxyadenosine + 2 L-methionine + 2 oxidized [2Fe-2S]-[ferredoxin]. Its pathway is cofactor biosynthesis; biotin biosynthesis; biotin from 7,8-diaminononanoate: step 2/2. Catalyzes the conversion of dethiobiotin (DTB) to biotin by the insertion of a sulfur atom into dethiobiotin via a radical-based mechanism. The protein is Biotin synthase of Synechococcus sp. (strain CC9311).